The chain runs to 94 residues: Small ribosomal subunit protein bS6 (94 aa).

It belongs to the bacterial ribosomal protein bS6 family.

Its function is as follows. Binds together with bS18 to 16S ribosomal RNA. The protein is Small ribosomal subunit protein bS6 of Alkaliphilus oremlandii (strain OhILAs) (Clostridium oremlandii (strain OhILAs)).